Consider the following 350-residue polypeptide: Induced myeloid leukemia cell differentiation protein Mcl-1 (350 aa).

Glycyl lysine isopeptide (Lys-Gly) (interchain with G-Cter in ubiquitin) cross-links involve residues Lys-5 and Lys-40. The interval 47 to 87 (EIGGGEAGAVIGGSAGASPPSTLTPDSRRVARPPPIGAEVP) is disordered. The segment covering 50–61 (GGEAGAVIGGSA) has biased composition (gly residues). The segment at 104–175 (RAAPLEEMEA…PAEEEEDELY (72 aa)) is PEST-like. Residue Ser-121 is modified to Phosphoserine. Lys-136 participates in a covalent cross-link: Glycyl lysine isopeptide (Lys-Gly) (interchain with G-Cter in ubiquitin). Residues 148-171 (GESGNNTSTDGSLPSTPPPAEEEE) are disordered. Over residues 150-161 (SGNNTSTDGSLP) the composition is skewed to polar residues. At Ser-159 the chain carries Phosphoserine; by GSK3-alpha and GSK3-beta. Position 162 is a phosphoserine (Ser-162). Position 163 is a phosphothreonine; by MAPK (Thr-163). Residues Lys-194 and Lys-197 each participate in a glycyl lysine isopeptide (Lys-Gly) (interchain with G-Cter in ubiquitin) cross-link. The BH3 signature appears at 209 to 223 (ALETLRRVGDGVQRN). Residues 252–272 (HVFSDGVTNWGRIVTLISFGA) carry the BH1 motif. The short motif at 304–319 (DWLVKQRGWDGFVEFF) is the BH2 element. Residues 328-348 (IRNVLLAFAGVAGVGAGLAYL) form a helical membrane-spanning segment.

This sequence belongs to the Bcl-2 family. In terms of assembly, interacts with HIF3A (via C-terminus domain). Interacts with BAD, BOK, BIK and BMF. Interacts with PMAIP1. Interacts with BBC3. Isoform 1 interacts with BAX, BAK1 and TPT1. Heterodimer of isoform 1 and isoform 2. Homodimers of isoform 1 or isoform 2 are not detected. Isoform 2 does not interact with pro-apoptotic BCL2-related proteins. Interacts with RTL10/BOP. Interacts with BCL2L11; may sequester BCL2L11 to prevent its pro-apoptotic activity. Interacts with GIMAP5 and HSPA8/HSC70; the interaction between HSPA8 and MCL1 is impaired in the absence of GIMAP5. Post-translationally, cleaved by CASP3 during apoptosis. In intact cells cleavage occurs preferentially after Asp-127, yielding a pro-apoptotic 28 kDa C-terminal fragment. In terms of processing, rapidly degraded in the absence of phosphorylation on Thr-163 in the PEST region. Phosphorylated on Ser-159, by GSK3, in response to IL3/interleukin-3 withdrawal. Phosphorylation at Ser-159 induces ubiquitination and proteasomal degradation, abrogating the anti-apoptotic activity. Treatment with taxol or okadaic acid induces phosphorylation on additional sites. Post-translationally, ubiquitinated. Ubiquitination is induced by phosphorylation at Ser-159. Deubiquitinated by USP20; leading to increased stability.

The protein resides in the membrane. Its subcellular location is the cytoplasm. It is found in the mitochondrion. It localises to the nucleus. The protein localises to the nucleoplasm. In terms of biological role, involved in the regulation of apoptosis versus cell survival, and in the maintenance of viability but not of proliferation. Mediates its effects by interactions with a number of other regulators of apoptosis. Isoform 1 inhibits apoptosis. Isoform 2 promotes apoptosis. The polypeptide is Induced myeloid leukemia cell differentiation protein Mcl-1 (MCL1) (Homo sapiens (Human)).